We begin with the raw amino-acid sequence, 152 residues long: uncharacterized protein (152 aa).

Residues 3–143 (EQKLCQAINL…IIEIFTILKS (141 aa)) enclose the HTH marR-type domain. Positions 55-78 (PGSLAMYQNVHKSAISNRLKKLLE) form a DNA-binding region, H-T-H motif.

This is an uncharacterized protein from Bacillus subtilis (strain 168).